The sequence spans 894 residues: Protein NLP9 (894 aa).

Positions 517-603 (QEISGARRLE…LDSVQGVEGG (87 aa)) constitute an RWP-RK domain. The stretch at 578 to 598 (RKINKVNRSLRKIQTVLDSVQ) forms a coiled coil. The disordered stretch occupies residues 732–763 (NTRIERGNGTVEPNHSISSSMSDSSNSSGAVL). The span at 747–763 (SISSSMSDSSNSSGAVL) shows a compositional bias: low complexity. Positions 792–875 (TLTVKATYRE…HTVKFLVRDI (84 aa)) constitute a PB1 domain.

The protein localises to the nucleus. In terms of biological role, probable transcription factor. The protein is Protein NLP9 (NLP9) of Arabidopsis thaliana (Mouse-ear cress).